The sequence spans 264 residues: Thymidylate synthase (264 aa).

Residue arginine 21 participates in dUMP binding. Residue histidine 51 coordinates (6R)-5,10-methylene-5,6,7,8-tetrahydrofolate. 126-127 (RR) contacts dUMP. The active-site Nucleophile is cysteine 146. DUMP-binding positions include 166–169 (RSGD), asparagine 177, and 207–209 (HLY). Aspartate 169 provides a ligand contact to (6R)-5,10-methylene-5,6,7,8-tetrahydrofolate. Alanine 263 is a (6R)-5,10-methylene-5,6,7,8-tetrahydrofolate binding site.

This sequence belongs to the thymidylate synthase family. Bacterial-type ThyA subfamily. As to quaternary structure, homodimer.

It is found in the cytoplasm. It carries out the reaction dUMP + (6R)-5,10-methylene-5,6,7,8-tetrahydrofolate = 7,8-dihydrofolate + dTMP. Its pathway is pyrimidine metabolism; dTTP biosynthesis. Functionally, catalyzes the reductive methylation of 2'-deoxyuridine-5'-monophosphate (dUMP) to 2'-deoxythymidine-5'-monophosphate (dTMP) while utilizing 5,10-methylenetetrahydrofolate (mTHF) as the methyl donor and reductant in the reaction, yielding dihydrofolate (DHF) as a by-product. This enzymatic reaction provides an intracellular de novo source of dTMP, an essential precursor for DNA biosynthesis. This is Thymidylate synthase from Xanthomonas axonopodis pv. citri (strain 306).